The primary structure comprises 377 residues: Flap endonuclease 1 (377 aa).

Residues methionine 1 to glutamine 105 form an N-domain region. Aspartate 34 lines the Mg(2+) pocket. Residues arginine 47 and arginine 71 each coordinate DNA. A Mg(2+)-binding site is contributed by aspartate 87. The interval glycine 96 to alanine 115 is disordered. The tract at residues methionine 123–histidine 254 is I-domain. Glutamate 159, glutamate 161, aspartate 180, and aspartate 182 together coordinate Mg(2+). Glutamate 159 is a DNA binding site. Glycine 232 and aspartate 234 together coordinate DNA. A Mg(2+)-binding site is contributed by aspartate 234. Residues proline 337 to phenylalanine 345 form an interaction with PCNA region. Residues serine 350 to arginine 377 are disordered. Residues alanine 360–arginine 377 are compositionally biased toward basic residues.

Belongs to the XPG/RAD2 endonuclease family. FEN1 subfamily. Interacts with PCNA. Three molecules of rad2 bind to one PCNA trimer with each molecule binding to one PCNA monomer. PCNA stimulates the nuclease activity without altering cleavage specificity. It depends on Mg(2+) as a cofactor. Phosphorylated. Phosphorylation upon DNA damage induces relocalization to the nuclear plasma.

The protein localises to the nucleus. Its subcellular location is the nucleolus. It localises to the nucleoplasm. It is found in the mitochondrion. Its function is as follows. Structure-specific nuclease with 5'-flap endonuclease and 5'-3' exonuclease activities involved in DNA replication and repair. During DNA replication, cleaves the 5'-overhanging flap structure that is generated by displacement synthesis when DNA polymerase encounters the 5'-end of a downstream Okazaki fragment. It enters the flap from the 5'-end and then tracks to cleave the flap base, leaving a nick for ligation. Also involved in the long patch base excision repair (LP-BER) pathway, by cleaving within the apurinic/apyrimidinic (AP) site-terminated flap. Acts as a genome stabilization factor that prevents flaps from equilibrating into structures that lead to duplications and deletions. Also possesses 5'-3' exonuclease activity on nicked or gapped double-stranded DNA, and exhibits RNase H activity. Also involved in replication and repair of rDNA and in repairing mitochondrial DNA. This chain is Flap endonuclease 1, found in Schizosaccharomyces japonicus (strain yFS275 / FY16936) (Fission yeast).